Reading from the N-terminus, the 762-residue chain is uncharacterized protein (762 aa).

Residues 334–542 (IIDILSNYLI…SDEEIAEHIL (209 aa)) form the MCM domain. An ATP-binding site is contributed by 384 to 391 (TDPGIGKS).

Belongs to the MCM family.

This is an uncharacterized protein from Methanocaldococcus jannaschii (strain ATCC 43067 / DSM 2661 / JAL-1 / JCM 10045 / NBRC 100440) (Methanococcus jannaschii).